The primary structure comprises 407 residues: Putative ammonium transporter MTH_661 (407 aa).

12 helical membrane-spanning segments follow: residues 9–29, 47–67, 70–90, 101–121, 129–149, 162–182, 196–216, 226–246, 257–277, 279–299, 312–332, and 357–377; these read AWMLISTALVILMTVPGVAMF, FVSLGIVSLLWFLFGYGLIFG, VSGIIGSHQVGISLINLGSAS, FAIFQMTFAAITVALISGAVV, WILFIPLWFALVYVPVAHWVW, FAGGIVVHITSGIAALALALV, LGYSVIGTGLLWFGWFGFNAG, ANAMIVTNTSAAAGMIGWILM, LGALSGAVAGLASITPAAGFV, IGASIVTGLVAAVICYLAVSW, VFGIHGVSGIIGTLGVGLFAV, and IGVVTVTVYTFVVTYILAMLL.

Belongs to the ammonia transporter channel (TC 1.A.11.2) family.

The protein localises to the cell membrane. This is Putative ammonium transporter MTH_661 from Methanothermobacter thermautotrophicus (strain ATCC 29096 / DSM 1053 / JCM 10044 / NBRC 100330 / Delta H) (Methanobacterium thermoautotrophicum).